A 234-amino-acid chain; its full sequence is Octanoyltransferase (234 aa).

One can recognise a BPL/LPL catalytic domain in the interval 35–221 (DGAPELVWFL…AFQQVFASPL (187 aa)). Residues 74–81 (RGGQYTYH), 150–152 (AIG), and 163–165 (GIS) contribute to the substrate site. Cysteine 181 (acyl-thioester intermediate) is an active-site residue.

This sequence belongs to the LipB family.

The protein resides in the cytoplasm. It carries out the reaction octanoyl-[ACP] + L-lysyl-[protein] = N(6)-octanoyl-L-lysyl-[protein] + holo-[ACP] + H(+). Its pathway is protein modification; protein lipoylation via endogenous pathway; protein N(6)-(lipoyl)lysine from octanoyl-[acyl-carrier-protein]: step 1/2. In terms of biological role, catalyzes the transfer of endogenously produced octanoic acid from octanoyl-acyl-carrier-protein onto the lipoyl domains of lipoate-dependent enzymes. Lipoyl-ACP can also act as a substrate although octanoyl-ACP is likely to be the physiological substrate. In Hyphomonas neptunium (strain ATCC 15444), this protein is Octanoyltransferase.